A 415-amino-acid polypeptide reads, in one-letter code: Gamma-glutamyl phosphate reductase (415 aa).

This sequence belongs to the gamma-glutamyl phosphate reductase family.

Its subcellular location is the cytoplasm. The enzyme catalyses L-glutamate 5-semialdehyde + phosphate + NADP(+) = L-glutamyl 5-phosphate + NADPH + H(+). It participates in amino-acid biosynthesis; L-proline biosynthesis; L-glutamate 5-semialdehyde from L-glutamate: step 2/2. Functionally, catalyzes the NADPH-dependent reduction of L-glutamate 5-phosphate into L-glutamate 5-semialdehyde and phosphate. The product spontaneously undergoes cyclization to form 1-pyrroline-5-carboxylate. In Clostridium perfringens (strain SM101 / Type A), this protein is Gamma-glutamyl phosphate reductase.